The primary structure comprises 110 residues: Large ribosomal subunit protein uL22 (110 aa).

The protein belongs to the universal ribosomal protein uL22 family. In terms of assembly, part of the 50S ribosomal subunit.

Its function is as follows. This protein binds specifically to 23S rRNA; its binding is stimulated by other ribosomal proteins, e.g. L4, L17, and L20. It is important during the early stages of 50S assembly. It makes multiple contacts with different domains of the 23S rRNA in the assembled 50S subunit and ribosome. Functionally, the globular domain of the protein is located near the polypeptide exit tunnel on the outside of the subunit, while an extended beta-hairpin is found that lines the wall of the exit tunnel in the center of the 70S ribosome. This is Large ribosomal subunit protein uL22 from Leptospira borgpetersenii serovar Hardjo-bovis (strain JB197).